A 337-amino-acid polypeptide reads, in one-letter code: Lipoyl synthase (337 aa).

Residues cysteine 81, cysteine 86, cysteine 92, cysteine 107, cysteine 111, cysteine 114, and serine 323 each coordinate [4Fe-4S] cluster. A Radical SAM core domain is found at 93 to 312 (FSHGTATFMI…EDYGNALGFS (220 aa)).

The protein belongs to the radical SAM superfamily. Lipoyl synthase family. The cofactor is [4Fe-4S] cluster.

It is found in the cytoplasm. The catalysed reaction is [[Fe-S] cluster scaffold protein carrying a second [4Fe-4S](2+) cluster] + N(6)-octanoyl-L-lysyl-[protein] + 2 oxidized [2Fe-2S]-[ferredoxin] + 2 S-adenosyl-L-methionine + 4 H(+) = [[Fe-S] cluster scaffold protein] + N(6)-[(R)-dihydrolipoyl]-L-lysyl-[protein] + 4 Fe(3+) + 2 hydrogen sulfide + 2 5'-deoxyadenosine + 2 L-methionine + 2 reduced [2Fe-2S]-[ferredoxin]. It participates in protein modification; protein lipoylation via endogenous pathway; protein N(6)-(lipoyl)lysine from octanoyl-[acyl-carrier-protein]: step 2/2. Functionally, catalyzes the radical-mediated insertion of two sulfur atoms into the C-6 and C-8 positions of the octanoyl moiety bound to the lipoyl domains of lipoate-dependent enzymes, thereby converting the octanoylated domains into lipoylated derivatives. The protein is Lipoyl synthase of Xanthomonas axonopodis pv. citri (strain 306).